Here is a 1243-residue protein sequence, read N- to C-terminus: Protein MMS22-like (1243 aa).

This sequence belongs to the MMS22 family. MMS22L subfamily. In terms of assembly, component of the MMS22L-TONSL complex.

It localises to the nucleus. Its subcellular location is the chromosome. Its function is as follows. Component of the MMS22L-TONSL complex, a complex that promotes homologous recombination-mediated repair of double-strand breaks (DSBs) at stalled or collapsed replication forks. The MMS22L-TONSL complex is required to maintain genome integrity during DNA replication. It mediates the assembly of RAD51 filaments on single-stranded DNA (ssDNA): the MMS22L-TONSL complex is recruited to DSBs following histone replacement by histone chaperones and eviction of the replication protein A complex (RPA/RP-A) from DSBs. Following recruitment to DSBs, the TONSL-MMS22L complex promotes recruitment of RAD51 filaments and subsequent homologous recombination. Within the complex, MMS22L acts by binding ssDNA. The chain is Protein MMS22-like (MMS22L) from Gallus gallus (Chicken).